Here is a 556-residue protein sequence, read N- to C-terminus: 2-isopropylmalate synthase (556 aa).

Residues 33–307 (PIWCSSDLRD…HPQLDFSDID (275 aa)) enclose the Pyruvate carboxyltransferase domain. Mg(2+) contacts are provided by aspartate 42, histidine 246, histidine 248, and asparagine 282. Residues 439–556 (ATSPYVLASH…AVTQAEAKAA (118 aa)) form a regulatory domain region.

Belongs to the alpha-IPM synthase/homocitrate synthase family. LeuA type 2 subfamily. As to quaternary structure, homodimer. The cofactor is Mg(2+).

The protein localises to the cytoplasm. It catalyses the reaction 3-methyl-2-oxobutanoate + acetyl-CoA + H2O = (2S)-2-isopropylmalate + CoA + H(+). It functions in the pathway amino-acid biosynthesis; L-leucine biosynthesis; L-leucine from 3-methyl-2-oxobutanoate: step 1/4. Functionally, catalyzes the condensation of the acetyl group of acetyl-CoA with 3-methyl-2-oxobutanoate (2-ketoisovalerate) to form 3-carboxy-3-hydroxy-4-methylpentanoate (2-isopropylmalate). The sequence is that of 2-isopropylmalate synthase from Pseudomonas aeruginosa (strain ATCC 15692 / DSM 22644 / CIP 104116 / JCM 14847 / LMG 12228 / 1C / PRS 101 / PAO1).